Here is a 485-residue protein sequence, read N- to C-terminus: Glutamate--tRNA ligase (485 aa).

Positions Pro12–Asn22 match the 'HIGH' region motif. The Zn(2+) site is built by Cys109, Cys111, Cys136, and His138. The short motif at Lys253–Arg257 is the 'KMSKS' region element. Lys256 lines the ATP pocket.

This sequence belongs to the class-I aminoacyl-tRNA synthetase family. Glutamate--tRNA ligase type 1 subfamily. Monomer. The cofactor is Zn(2+).

The protein localises to the cytoplasm. It catalyses the reaction tRNA(Glu) + L-glutamate + ATP = L-glutamyl-tRNA(Glu) + AMP + diphosphate. Functionally, catalyzes the attachment of glutamate to tRNA(Glu) in a two-step reaction: glutamate is first activated by ATP to form Glu-AMP and then transferred to the acceptor end of tRNA(Glu). The protein is Glutamate--tRNA ligase of Clostridium botulinum (strain Eklund 17B / Type B).